A 120-amino-acid polypeptide reads, in one-letter code: 5-hydroxyisourate hydrolase 2 (120 aa).

Substrate is bound by residues His-10, Arg-48, and Tyr-117.

It belongs to the transthyretin family. 5-hydroxyisourate hydrolase subfamily. In terms of assembly, homotetramer.

It carries out the reaction 5-hydroxyisourate + H2O = 5-hydroxy-2-oxo-4-ureido-2,5-dihydro-1H-imidazole-5-carboxylate + H(+). Functionally, catalyzes the hydrolysis of 5-hydroxyisourate (HIU) to 2-oxo-4-hydroxy-4-carboxy-5-ureidoimidazoline (OHCU). The sequence is that of 5-hydroxyisourate hydrolase 2 from Rhizobium meliloti (strain 1021) (Ensifer meliloti).